The chain runs to 458 residues: Selection and upkeep of intraepithelial T-cells protein 3 (458 aa).

The signal sequence occupies residues 1 to 24 (MGSIQIIFAAYCVVLCVLQMLVLS). Residues 25-237 (SEQFTITGLE…ESISIVLTGD (213 aa)) lie on the Extracellular side of the membrane. An Ig-like V-type domain is found at 26–141 (EQFTITGLER…EEHITEVKVT (116 aa)). 2 disulfide bridges follow: Cys-49-Cys-123 and Cys-163-Cys-217. The region spanning 142-231 (ATSSDIKIIM…LLTHQEESIS (90 aa)) is the Ig-like C1-type domain. The N-linked (GlcNAc...) asparagine glycan is linked to Asn-200. The chain crosses the membrane as a helical span at residues 238–258 (LFSWKIDWILILSIIACVMIP). Residues 259–283 (YSMTSYLQQHLIHGSCSQRSHHWRK) are Cytoplasmic-facing. Residues 284–304 (NAMVCMSSVIAIIGSMLILHL) form a helical membrane-spanning segment. The Extracellular segment spans residues 305–324 (KQRVPISDQHFELDTLYLED). A helical transmembrane segment spans residues 325 to 345 (ISVILCVVIVFNLKLNLLTYY). The Cytoplasmic portion of the chain corresponds to 346–359 (RLERKYDGCTPGCK). A helical membrane pass occupies residues 360–380 (ACFYILKIIIIILPFVFTFGC). Over 381–414 (YNAIFLKYHQLQKKVSIPDPLYYFYTSWLVNMEM) the chain is Extracellular. The helical transmembrane segment at 415–435 (LGVFLVFFPTFINLIEFSQFI) threads the bilayer. At 436 to 458 (KTVPKPIWLCQENMREDDAIRHR) the chain is on the cytoplasmic side.

The protein belongs to the SKINT family. Expressed in skin and thymus.

Its subcellular location is the membrane. Its function is as follows. May act by engaging a cell surface molecule on immature T-cells in the embryonic thymus. The polypeptide is Selection and upkeep of intraepithelial T-cells protein 3 (Skint3) (Mus musculus (Mouse)).